Reading from the N-terminus, the 193-residue chain is Chromophore lyase CpcS/CpeS 4 (193 aa).

This sequence belongs to the CpcS/CpeS biliprotein lyase family.

Covalently attaches a chromophore to Cys residue(s) of phycobiliproteins. This chain is Chromophore lyase CpcS/CpeS 4, found in Trichodesmium erythraeum (strain IMS101).